The primary structure comprises 228 residues: CD302 antigen (228 aa).

Positions 1-20 (MPHAALSSLVLLSLATAIFA) are cleaved as a signal peptide. Residues 21-165 (DCPSSIWVQF…YDKKYLSDNH (145 aa)) lie on the Extracellular side of the membrane. Positions 30–149 (FQGSCYTFLQ…CEMSSVTGTL (120 aa)) constitute a C-type lectin domain. N107 carries N-linked (GlcNAc...) asparagine glycosylation. C125 and C140 are disulfide-bonded. A helical membrane pass occupies residues 166 to 186 (ILISTLVIASTVTLAVLGAVI). Residues 187–228 (WFLYRRSARSGFTSFSPAPQSPYSDGCALVVSEEDEYSVQLD) are Cytoplasmic-facing.

It is found in the membrane. It localises to the cell projection. The protein localises to the filopodium. The protein resides in the cytoplasm. Its subcellular location is the cell cortex. It is found in the microvillus. Its function is as follows. Potential multifunctional C-type lectin receptor that may play roles in endocytosis and phagocytosis as well as in cell adhesion and migration. The protein is CD302 antigen (Cd302) of Rattus norvegicus (Rat).